The following is a 267-amino-acid chain: tRNA pseudouridine synthase A (267 aa).

Residue D53 is the Nucleophile of the active site. Y114 contacts substrate.

The protein belongs to the tRNA pseudouridine synthase TruA family. Homodimer.

It catalyses the reaction uridine(38/39/40) in tRNA = pseudouridine(38/39/40) in tRNA. Functionally, formation of pseudouridine at positions 38, 39 and 40 in the anticodon stem and loop of transfer RNAs. This chain is tRNA pseudouridine synthase A, found in Chlamydia trachomatis serovar L2b (strain UCH-1/proctitis).